The sequence spans 147 residues: Cyanate hydratase (147 aa).

Residues Arg-88, Glu-91, and Ser-114 contribute to the active site.

It belongs to the cyanase family.

It catalyses the reaction cyanate + hydrogencarbonate + 3 H(+) = NH4(+) + 2 CO2. Functionally, catalyzes the reaction of cyanate with bicarbonate to produce ammonia and carbon dioxide. This chain is Cyanate hydratase, found in Ralstonia pickettii (strain 12J).